The primary structure comprises 110 residues: UPF0060 membrane protein Pmen_1247 (110 aa).

4 helical membrane passes run 5–25 (LWFL…WMWL), 31–51 (AWWI…LTRV), 59–79 (AYAA…ALIE), and 84–104 (MLSD…ILFA).

It belongs to the UPF0060 family.

The protein resides in the cell inner membrane. This Ectopseudomonas mendocina (strain ymp) (Pseudomonas mendocina) protein is UPF0060 membrane protein Pmen_1247.